The following is a 456-amino-acid chain: Gamma-aminobutyric acid receptor subunit alpha-1 (456 aa).

Positions Met-1–Gly-27 are cleaved as a signal peptide. Residues Gln-28–Phe-253 are Extracellular-facing. Asn-38 is a glycosylation site (N-linked (GlcNAc...) asparagine). Residue Arg-94 participates in 4-aminobutanoate binding. The N-linked (GlcNAc...) asparagine glycan is linked to Asn-138. Thr-157 contacts 4-aminobutanoate. The cysteines at positions 166 and 180 are disulfide-linked. A helical membrane pass occupies residues Val-254–Leu-274. The Cytoplasmic segment spans residues Asn-275–Val-279. A helical transmembrane segment spans residues Pro-280–Arg-301. The Extracellular portion of the chain corresponds to Asn-302–Thr-311. Residues Ala-312–Thr-333 traverse the membrane as a helical segment. Topologically, residues Val-334 to Arg-421 are cytoplasmic. Residues Leu-422 to Thr-441 form a helical membrane-spanning segment. Residues Tyr-442–Gln-456 lie on the Extracellular side of the membrane.

This sequence belongs to the ligand-gated ion channel (TC 1.A.9) family. Gamma-aminobutyric acid receptor (TC 1.A.9.5) subfamily. GABRA1 sub-subfamily. Heteropentamer, formed by a combination of alpha (GABRA1-6), beta (GABRB1-3), gamma (GABRG1-3), delta (GABRD), epsilon (GABRE), rho (GABRR1-3), pi (GABRP) and theta (GABRQ) subunits, each subunit exhibiting distinct physiological and pharmacological properties. Interacts with UBQLN1. Interacts with TRAK1. Interacts with KIF21B. Identified in a complex of 720 kDa composed of LHFPL4, NLGN2, GABRA1, GABRB2, GABRG2 and GABRB3. Interacts with LHFPL4. Interacts with NLGN2. Interacts with SHISA7; interaction leads to the regulation of GABA(A) receptor trafficking, channel deactivation kinetics and pharmacology.

The protein resides in the postsynaptic cell membrane. It is found in the cell membrane. It localises to the cytoplasmic vesicle membrane. The enzyme catalyses chloride(in) = chloride(out). Its activity is regulated as follows. Allosterically activated by benzodiazepines, the neuroanesthetic alphaxalone and pentobarbital. Inhibited by the antagonist bicuculline. Potentiated by histamine. In terms of biological role, alpha subunit of the heteropentameric ligand-gated chloride channel gated by gamma-aminobutyric acid (GABA), a major inhibitory neurotransmitter in the brain. GABA-gated chloride channels, also named GABA(A) receptors (GABAAR), consist of five subunits arranged around a central pore and contain GABA active binding site(s) located at the alpha and beta subunit interface(s). When activated by GABA, GABAARs selectively allow the flow of chloride anions across the cell membrane down their electrochemical gradient. Alpha-1/GABRA1-containing GABAARs are largely synaptic. Chloride influx into the postsynaptic neuron following GABAAR opening decreases the neuron ability to generate a new action potential, thereby reducing nerve transmission. GABAARs containing alpha-1 and beta-2 or -3 subunits exhibit synaptogenic activity; the gamma-2 subunit being necessary but not sufficient to induce rapid synaptic contacts formation. GABAARs function also as histamine receptor where histamine binds at the interface of two neighboring beta subunits and potentiates GABA response. GABAARs containing alpha, beta and epsilon subunits also permit spontaneous chloride channel activity while preserving the structural information required for GABA-gated openings. Alpha-1-mediated plasticity in the orbitofrontal cortex regulates context-dependent action selection. Together with rho subunits, may also control neuronal and glial GABAergic transmission in the cerebellum. This is Gamma-aminobutyric acid receptor subunit alpha-1 (GABRA1) from Macaca fascicularis (Crab-eating macaque).